Here is a 562-residue protein sequence, read N- to C-terminus: TBC1 domain family member 24 (562 aa).

A 1,2-diacyl-sn-glycero-3-phospho-(1D-myo-inositol) contacts are provided by residues K36, R40, K238, R242, and 293–297 (RLFSR). Residues 42–259 (GHWAKSHSLR…FFHKVRGGQP (218 aa)) enclose the Rab-GAP TBC domain. The TLDc domain occupies 337 to 549 (EIVSVKEMRD…ISIIEVWGFK (213 aa)). Over residues 451-464 (ASSGDNDANSSQSA) the composition is skewed to low complexity. A disordered region spans residues 451-471 (ASSGDNDANSSQSAKDGIDPS).

As to quaternary structure, interacts with ARF6.

Its subcellular location is the cell membrane. The protein resides in the cytoplasm. It is found in the cytoplasmic vesicle membrane. The protein localises to the presynapse. In terms of biological role, may act as a GTPase-activating protein for Rab family protein(s). Involved in neuronal projections development, probably through a negative modulation of ARF6 function. Involved in the regulation of synaptic vesicle trafficking. The polypeptide is TBC1 domain family member 24 (tbc1d24) (Xenopus tropicalis (Western clawed frog)).